Reading from the N-terminus, the 220-residue chain is Iron-sulfur cluster repair protein YtfE (220 aa).

This sequence belongs to the RIC family. YtfE subfamily. As to quaternary structure, homodimer.

The protein resides in the cytoplasm. In terms of biological role, di-iron-containing protein involved in the repair of iron-sulfur clusters damaged by oxidative and nitrosative stress conditions. The polypeptide is Iron-sulfur cluster repair protein YtfE (Escherichia coli O157:H7).